The sequence spans 225 residues: Fibronectin type III domain-containing protein (225 aa).

Residues 1–17 (MFSFGIILLTVVSFTNA) form the signal peptide. Residues 106–206 (PPTNVIVEST…MPLNVKTPDI (101 aa)) form the Fibronectin type-III domain.

As to expression, component of the organic matrix of calcified shell layers like nacre and prisms.

The protein localises to the secreted. This Mytilus californianus (California mussel) protein is Fibronectin type III domain-containing protein.